We begin with the raw amino-acid sequence, 283 residues long: Putative pyruvate, phosphate dikinase regulatory protein (283 aa).

ADP is bound at residue 154 to 161 (GVSRTSKT).

Belongs to the pyruvate, phosphate/water dikinase regulatory protein family. PDRP subfamily.

It catalyses the reaction N(tele)-phospho-L-histidyl/L-threonyl-[pyruvate, phosphate dikinase] + ADP = N(tele)-phospho-L-histidyl/O-phospho-L-threonyl-[pyruvate, phosphate dikinase] + AMP + H(+). The catalysed reaction is N(tele)-phospho-L-histidyl/O-phospho-L-threonyl-[pyruvate, phosphate dikinase] + phosphate + H(+) = N(tele)-phospho-L-histidyl/L-threonyl-[pyruvate, phosphate dikinase] + diphosphate. Functionally, bifunctional serine/threonine kinase and phosphorylase involved in the regulation of the pyruvate, phosphate dikinase (PPDK) by catalyzing its phosphorylation/dephosphorylation. The chain is Putative pyruvate, phosphate dikinase regulatory protein from Afipia carboxidovorans (strain ATCC 49405 / DSM 1227 / KCTC 32145 / OM5) (Oligotropha carboxidovorans).